Consider the following 339-residue polypeptide: Transposase for insertion sequence element IS1086 (339 aa).

One can recognise an Integrase catalytic domain in the interval 176–329 (DRLMPGHWEG…SPLQVLAQVL (154 aa)).

Belongs to the transposase IS30 family.

Functionally, required for the transposition of the insertion element. This chain is Transposase for insertion sequence element IS1086 (IS1086), found in Cupriavidus metallidurans (strain ATCC 43123 / DSM 2839 / NBRC 102507 / CH34) (Ralstonia metallidurans).